The following is a 355-amino-acid chain: Elongation factor Ts (355 aa).

Residues 82-85 form an involved in Mg(2+) ion dislocation from EF-Tu region; sequence TDFV.

It belongs to the EF-Ts family.

The protein resides in the cytoplasm. In terms of biological role, associates with the EF-Tu.GDP complex and induces the exchange of GDP to GTP. It remains bound to the aminoacyl-tRNA.EF-Tu.GTP complex up to the GTP hydrolysis stage on the ribosome. The polypeptide is Elongation factor Ts (Helicobacter hepaticus (strain ATCC 51449 / 3B1)).